The sequence spans 123 residues: Glycine cleavage system H protein (123 aa).

Positions 23–104 (HWLAGITDHA…PYDAWIFSFE (82 aa)) constitute a Lipoyl-binding domain. Residue lysine 64 is modified to N6-lipoyllysine.

The protein belongs to the GcvH family. As to quaternary structure, the glycine cleavage system is composed of four proteins: P, T, L and H. (R)-lipoate serves as cofactor.

Functionally, the glycine cleavage system catalyzes the degradation of glycine. The H protein shuttles the methylamine group of glycine from the P protein to the T protein. In Methylobacillus flagellatus (strain ATCC 51484 / DSM 6875 / VKM B-1610 / KT), this protein is Glycine cleavage system H protein.